The sequence spans 69 residues: Large ribosomal subunit protein bL31 (69 aa).

4 residues coordinate Zn(2+): cysteine 16, cysteine 18, cysteine 36, and cysteine 39.

Belongs to the bacterial ribosomal protein bL31 family. Type A subfamily. As to quaternary structure, part of the 50S ribosomal subunit. Zn(2+) is required as a cofactor.

Its function is as follows. Binds the 23S rRNA. The chain is Large ribosomal subunit protein bL31 from Kosmotoga olearia (strain ATCC BAA-1733 / DSM 21960 / TBF 19.5.1).